A 183-amino-acid chain; its full sequence is MDTTNLVRRDIVIGSRRVSNYWWASVLLLGGSSFLVVGLSSRLGFDLVPFLPAGDIIFIPQGLVMCFYGLVGLVVSTYLWLTILWSVGGGYNEFNKQEGVMRIFRWGFPGRDRRIQLTCPLQDIEAIRVELQEGMNPRRTIYVRLKGKREVPLTRIGQPLTLAEIEKQAAELAGFLQVSLEGF.

Helical transmembrane passes span 21–43 (YWWA…SSRL) and 58–80 (FIPQ…TYLW).

The protein belongs to the Ycf4 family.

Its subcellular location is the plastid. It is found in the chloroplast thylakoid membrane. Its function is as follows. Seems to be required for the assembly of the photosystem I complex. In Nephroselmis olivacea (Green alga), this protein is Photosystem I assembly protein Ycf4.